The following is a 329-amino-acid chain: Cytosolic arginine sensor for mTORC1 subunit 2 (329 aa).

2 consecutive ACT domains span residues 72–140 and 262–322; these read ADAT…HTLS and ELWK…SALK.

This sequence belongs to the GATS family. Forms homodimers and heterodimers with CASTOR1. Interacts with the GATOR2 complex which is composed of MIOS, SEC13, SEH1L, WDR24 and WDR59; the interaction is not regulated by arginine. In terms of tissue distribution, widely expressed.

Its subcellular location is the cytoplasm. It is found in the cytosol. In terms of biological role, functions as a negative regulator of the TORC1 signaling pathway through the GATOR complex. As part of homodimers or heterodimers with CASTOR1, directly binds and inhibits the GATOR subcomplex GATOR2 and thereby mTORC1. Does not directly bind arginine, but binding of arginine to CASTOR1 disrupts the interaction of CASTOR2-containing heterodimers with GATOR2 which can in turn activate mTORC1 and the TORC1 signaling pathway. In Homo sapiens (Human), this protein is Cytosolic arginine sensor for mTORC1 subunit 2.